Here is a 271-residue protein sequence, read N- to C-terminus: Dioscorin dioA3 (271 aa).

A signal peptide spans 1–21 (MSSSTLLHLLLLSSLLFSCLS). The region spanning 28–262 (DEFSYIEGNP…TNFRSVFYFE (235 aa)) is the Alpha-carbonic anhydrase domain. Residues Cys53 and Cys212 are joined by a disulfide bond. His94 (proton acceptor) is an active-site residue. L-ascorbate is bound by residues Asp95, 120–122 (HFH), Gln139, and 208–209 (TA).

It belongs to the alpha-carbonic anhydrase family. As to quaternary structure, monomer. Homodimer. Post-translationally, not glycosylated. Expressed in tuber (at protein level).

It catalyses the reaction hydrogencarbonate + H(+) = CO2 + H2O. The catalysed reaction is 2 monodehydro-L-ascorbate radical + NADH + H(+) = 2 L-ascorbate + NAD(+). Its activity is regulated as follows. The carbonate dehydratase activity is not substantially changed by the addition of Zn(2+). Its function is as follows. Storage protein of tuber. Involved in protection against oxidative stress. Has carbonate dehydratase, trypsin inhibitor, dehydroascorbate (DHA) reductase and monodehydroascorbate (MDA) reductase activities. Catalyzes the reactions of carbonate dehydratase and DHA reductase independently of zinc and glutathione (GSH). The coupled reaction is capable of recycling a plant antioxidant ascorbate using ubiquitous compounds H(2)O and CO(2). Exhibits antioxidant activity. Able to scavenge 1,1-diphenyl-2-picrylhydrazyl (DPPH) radical. Exhibits immunomodulatory activity. Activates Toll-like receptor 4 signaling pathways by up-regulating the gene expression of pro-inflammatory cytokines, such as tumor necrosis factor alpha, interleukin-1 beta and interleukin-6, and chemokines RANTES and MCP-1, in mouse RAW 264.7 macrophages. Stimulates the phagocytosis of E.coli by the LPS-treated mouse macrophages. The protein is Dioscorin dioA3 of Dioscorea japonica (Japanese yam).